The sequence spans 128 residues: 3-aminoacrylate deaminase RutC (128 aa).

It belongs to the RutC family.

The enzyme catalyses (Z)-3-aminoacrylate + H2O + H(+) = 3-oxopropanoate + NH4(+). Its function is as follows. Involved in pyrimidine catabolism. Catalyzes the deamination of 3-aminoacrylate to malonic semialdehyde, a reaction that can also occur spontaneously. RutC may facilitate the reaction and modulate the metabolic fitness, rather than catalyzing essential functions. The protein is 3-aminoacrylate deaminase RutC of Azorhizobium caulinodans (strain ATCC 43989 / DSM 5975 / JCM 20966 / LMG 6465 / NBRC 14845 / NCIMB 13405 / ORS 571).